A 72-amino-acid polypeptide reads, in one-letter code: ATP synthase subunit c (72 aa).

The next 2 helical transmembrane spans lie at 5–25 (LLAAGIAVLAGIGAGIGIGIA) and 51–71 (AGLSEATAIYGLVVSIILLFV).

Belongs to the ATPase C chain family. F-type ATPases have 2 components, F(1) - the catalytic core - and F(0) - the membrane proton channel. F(1) has five subunits: alpha(3), beta(3), gamma(1), delta(1), epsilon(1). F(0) has three main subunits: a(1), b(2) and c(10-14). The alpha and beta chains form an alternating ring which encloses part of the gamma chain. F(1) is attached to F(0) by a central stalk formed by the gamma and epsilon chains, while a peripheral stalk is formed by the delta and b chains.

It localises to the cell membrane. In terms of biological role, f(1)F(0) ATP synthase produces ATP from ADP in the presence of a proton or sodium gradient. F-type ATPases consist of two structural domains, F(1) containing the extramembraneous catalytic core and F(0) containing the membrane proton channel, linked together by a central stalk and a peripheral stalk. During catalysis, ATP synthesis in the catalytic domain of F(1) is coupled via a rotary mechanism of the central stalk subunits to proton translocation. Key component of the F(0) channel; it plays a direct role in translocation across the membrane. A homomeric c-ring of between 10-14 subunits forms the central stalk rotor element with the F(1) delta and epsilon subunits. This Clostridium perfringens (strain ATCC 13124 / DSM 756 / JCM 1290 / NCIMB 6125 / NCTC 8237 / Type A) protein is ATP synthase subunit c.